The sequence spans 467 residues: Serine/threonine-protein phosphatase 2A 56 kDa regulatory subunit epsilon isoform (467 aa).

A disordered region spans residues 1–40 (MSSAPTTPPSVDKVDGFSRKSVRKARQKRSQSSSQFRSQG). Ser-2 carries the post-translational modification N-acetylserine. Thr-7 bears the Phosphothreonine mark. Over residues 20 to 29 (KSVRKARQKR) the composition is skewed to basic residues. 3 positions are modified to phosphoserine: Ser-30, Ser-32, and Ser-34. The span at 30 to 40 (SQSSSQFRSQG) shows a compositional bias: low complexity.

This sequence belongs to the phosphatase 2A regulatory subunit B56 family. Found in a complex with at least ARL2, PPP2CB; PPP2R1A, PPP2R2A, PPP2R5E and TBCD. PP2A consists of a common heterodimeric core enzyme, composed of a 36 kDa catalytic subunit (subunit C) and a 65 kDa constant regulatory subunit (PR65 or subunit A), that associates with a variety of regulatory subunits. Proteins that associate with the core dimer include three families of regulatory subunits B (the R2/B/PR55/B55, R3/B''/PR72/PR130/PR59 and R5/B'/B56 families), the 48 kDa variable regulatory subunit, viral proteins, and cell signaling molecules. Interacts with SGO1. Post-translationally, phosphorylated on serine residues.

It is found in the cytoplasm. Functionally, the B regulatory subunit might modulate substrate selectivity and catalytic activity, and might also direct the localization of the catalytic enzyme to a particular subcellular compartment. The polypeptide is Serine/threonine-protein phosphatase 2A 56 kDa regulatory subunit epsilon isoform (PPP2R5E) (Homo sapiens (Human)).